Here is a 499-residue protein sequence, read N- to C-terminus: Probable cytosol aminopeptidase (499 aa).

Lysine 263 and aspartate 268 together coordinate Mn(2+). Residue lysine 275 is part of the active site. Mn(2+) contacts are provided by aspartate 286, aspartate 345, and glutamate 347. Residue arginine 349 is part of the active site.

This sequence belongs to the peptidase M17 family. It depends on Mn(2+) as a cofactor.

Its subcellular location is the cytoplasm. The catalysed reaction is Release of an N-terminal amino acid, Xaa-|-Yaa-, in which Xaa is preferably Leu, but may be other amino acids including Pro although not Arg or Lys, and Yaa may be Pro. Amino acid amides and methyl esters are also readily hydrolyzed, but rates on arylamides are exceedingly low.. It catalyses the reaction Release of an N-terminal amino acid, preferentially leucine, but not glutamic or aspartic acids.. Its function is as follows. Presumably involved in the processing and regular turnover of intracellular proteins. Catalyzes the removal of unsubstituted N-terminal amino acids from various peptides. The protein is Probable cytosol aminopeptidase of Chlamydia trachomatis serovar L2 (strain ATCC VR-902B / DSM 19102 / 434/Bu).